The following is a 485-amino-acid chain: Glutamyl-tRNA(Gln) amidotransferase subunit A (485 aa).

Active-site charge relay system residues include Lys78 and Ser153. Ser177 acts as the Acyl-ester intermediate in catalysis.

Belongs to the amidase family. GatA subfamily. As to quaternary structure, heterotrimer of A, B and C subunits.

It carries out the reaction L-glutamyl-tRNA(Gln) + L-glutamine + ATP + H2O = L-glutaminyl-tRNA(Gln) + L-glutamate + ADP + phosphate + H(+). In terms of biological role, allows the formation of correctly charged Gln-tRNA(Gln) through the transamidation of misacylated Glu-tRNA(Gln) in organisms which lack glutaminyl-tRNA synthetase. The reaction takes place in the presence of glutamine and ATP through an activated gamma-phospho-Glu-tRNA(Gln). In Desulfatibacillum aliphaticivorans, this protein is Glutamyl-tRNA(Gln) amidotransferase subunit A.